The chain runs to 454 residues: MAMAAMDARKKKSGGGGGEPLLGKYELGRMLGRGTFAKVYLARAVAGGEAVAVKVIDKAEVMGTAGMAPRVLREVAAMRRLRHPHVLRLHEVLATRARIYLVMELATGGDLLSRLAALPRRRLPESAARRVFVQLVDALSYCHARGVAHRDVKPQNVLLDGDGNLKVSDFGLAALPDTLRDDGRLHTACGTPAYAAPEVLRRRAYDGAKADAWSCGVILFVLLAGHLPFDDSNIADMCRKAHRREYELPRWVSQPARRLVSRLLDPNPDTRVAVESLAAHHPWFKRSLSVDSQLDGLLNGEPERAVAFQAAPPPPLNAFDIISMSPGLDLSGLFGEHDKSLREKRFTTTASPEKTLEQLGLAGGKLGYVVVVGKKGVECLPLAGGRLSSGIAAMSVEMSEVAPPLLLVELRLEVAAGDVDGGDGEVKGFGWEQLRMELGDVVRAWHSCEDLCEI.

A Protein kinase domain is found at 25-284; it reads YELGRMLGRG…ESLAAHHPWF (260 aa). Residues 31-39 and lysine 54 each bind ATP; that span reads LGRGTFAKV. The active-site Proton acceptor is aspartate 151. The activation loop stretch occupies residues 169-198; the sequence is DFGLAALPDTLRDDGRLHTACGTPAYAAPE. The region spanning 311–335 is the NAF domain; the sequence is APPPPLNAFDIISMSPGLDLSGLFG. Residues 341–370 are PPI; that stretch reads LREKRFTTTASPEKTLEQLGLAGGKLGYVV.

Belongs to the protein kinase superfamily. CAMK Ser/Thr protein kinase family. SNF1 subfamily. The cofactor is Mn(2+).

It catalyses the reaction L-seryl-[protein] + ATP = O-phospho-L-seryl-[protein] + ADP + H(+). It carries out the reaction L-threonyl-[protein] + ATP = O-phospho-L-threonyl-[protein] + ADP + H(+). Its function is as follows. CIPK serine-threonine protein kinases interact with CBL proteins. Binding of a CBL protein to the regulatory NAF domain of CIPK protein lead to the activation of the kinase in a calcium-dependent manner. This Oryza sativa subsp. japonica (Rice) protein is CBL-interacting protein kinase 4 (CIPK4).